The sequence spans 245 residues: Ureidoacrylate amidohydrolase RutB (245 aa).

Catalysis depends on Asp-41, which acts as the Proton acceptor. Residue Lys-150 is part of the active site. Residue Cys-183 is the Nucleophile of the active site.

The protein belongs to the isochorismatase family. RutB subfamily.

It catalyses the reaction (Z)-3-ureidoacrylate + H2O + H(+) = (Z)-3-aminoacrylate + NH4(+) + CO2. The enzyme catalyses (Z)-3-ureidoacrylate + H2O = (Z)-3-aminoacrylate + carbamate + H(+). It carries out the reaction (Z)-2-methylureidoacrylate + H2O + H(+) = (Z)-2-methylaminoacrylate + NH4(+) + CO2. Hydrolyzes ureidoacrylate to form aminoacrylate and carbamate. The carbamate hydrolyzes spontaneously, thereby releasing one of the nitrogen atoms of the pyrimidine ring as ammonia and one of its carbon atoms as CO2. The polypeptide is Ureidoacrylate amidohydrolase RutB (Pseudomonas savastanoi pv. phaseolicola (strain 1448A / Race 6) (Pseudomonas syringae pv. phaseolicola (strain 1448A / Race 6))).